Here is a 239-residue protein sequence, read N- to C-terminus: Ribonuclease PH (239 aa).

Phosphate is bound by residues Arg86 and 124 to 126 (GTR).

Belongs to the RNase PH family. In terms of assembly, homohexameric ring arranged as a trimer of dimers.

The enzyme catalyses tRNA(n+1) + phosphate = tRNA(n) + a ribonucleoside 5'-diphosphate. Its function is as follows. Phosphorolytic 3'-5' exoribonuclease that plays an important role in tRNA 3'-end maturation. Removes nucleotide residues following the 3'-CCA terminus of tRNAs; can also add nucleotides to the ends of RNA molecules by using nucleoside diphosphates as substrates, but this may not be physiologically important. Probably plays a role in initiation of 16S rRNA degradation (leading to ribosome degradation) during starvation. This chain is Ribonuclease PH, found in Anaeromyxobacter dehalogenans (strain 2CP-1 / ATCC BAA-258).